The primary structure comprises 455 residues: Bleomycin hydrolase (455 aa).

Active-site residues include Cys-73, His-372, and Asn-396.

This sequence belongs to the peptidase C1 family. Homooctamer.

The protein localises to the cytoplasm. The catalysed reaction is Inactivates bleomycin B2 (a cytotoxic glycometallopeptide) by hydrolysis of a carboxyamide bond of beta-aminoalanine, but also shows general aminopeptidase activity. The specificity varies somewhat with source, but amino acid arylamides of Met, Leu and Ala are preferred.. Functionally, the normal physiological role of BLM hydrolase is unknown, but it catalyzes the inactivation of the antitumor drug BLM (a glycopeptide) by hydrolyzing the carboxamide bond of its B-aminoalaninamide moiety thus protecting normal and malignant cells from BLM toxicity. This chain is Bleomycin hydrolase (BLMH), found in Gallus gallus (Chicken).